The chain runs to 865 residues: DNA topoisomerase 1 (865 aa).

In terms of domain architecture, Toprim spans 3–142 (KALVIVESPA…RYSRVVFNEI (140 aa)). E9 is a Mg(2+) binding site. The interval 37–65 (LPTSGSAAKKSADSTSTKTAKKPKKDERG) is disordered. Residues 39-54 (TSGSAAKKSADSTSTK) are compositionally biased toward low complexity. D111 is a Mg(2+) binding site. The region spanning 158–575 (NIDRVNAQQA…HFFSDFTQQL (418 aa)) is the Topo IA-type catalytic domain. The interval 192 to 197 (SAGRVQ) is interaction with DNA. Y319 acts as the O-(5'-phospho-DNA)-tyrosine intermediate in catalysis. 3 C4-type zinc fingers span residues 599–630 (CPTC…KERC), 662–689 (CPKC…NPTC), and 711–736 (CEKC…NEEC).

It belongs to the type IA topoisomerase family. In terms of assembly, monomer. It depends on Mn(2+) as a cofactor. Ca(2+) serves as cofactor.

The catalysed reaction is ATP-independent breakage of single-stranded DNA, followed by passage and rejoining.. In terms of biological role, releases the supercoiling and torsional tension of DNA, which is introduced during the DNA replication and transcription, by transiently cleaving and rejoining one strand of the DNA duplex. Introduces a single-strand break via transesterification at a target site in duplex DNA. The scissile phosphodiester is attacked by the catalytic tyrosine of the enzyme, resulting in the formation of a DNA-(5'-phosphotyrosyl)-enzyme intermediate and the expulsion of a 3'-OH DNA strand. The free DNA strand then undergoes passage around the unbroken strand, thus removing DNA supercoils. Finally, in the religation step, the DNA 3'-OH attacks the covalent intermediate to expel the active-site tyrosine and restore the DNA phosphodiester backbone. In Escherichia coli (strain K12), this protein is DNA topoisomerase 1.